A 361-amino-acid polypeptide reads, in one-letter code: MMVNHNNGQRPTDIDSRLRQTEQDKLLFHDFLGSKNPTLASTSMADHRLPPDNKAAKAAMTPSTASASSAGGLGGLSSTSDLVERHSGGGNHLDGIQLFGPRSDVSGSIMSNRFSGNKRSNSDSHFTTQEHPETLHWSKLLRNGPGSFSMNVNPLANQPPRGGGQISHLLHQLSTSRFKDENVGPSVIAQTAADEGSRTGMKGPGILSSFTMPNSSKLESFAPSNTGNRKDLASSTKQMTIFYGGQAHVFDDVHPNKADVIMALAGSSGGSWSTGLSHKPKSKNNTSDGPYKLGQMYEGGSSKETPQMPPEFRARPSHQPTSSACHRIFTQPGREHQGSIISRGRDIRDPVHRSDPEKEAT.

Disordered stretches follow at residues 53 to 78 (NKAA…GLSS), 113 to 134 (RFSG…HPET), 190 to 232 (QTAA…RKDL), and 268 to 361 (SGGS…KEAT). The span at 56 to 78 (AKAAMTPSTASASSAGGLGGLSS) shows a compositional bias: low complexity. Polar residues-rich tracts occupy residues 113–127 (RFSG…SHFT) and 208–232 (SSFT…RKDL). The region spanning 232–267 (LASSTKQMTIFYGGQAHVFDDVHPNKADVIMALAGS) is the Tify domain. The segment covering 333–361 (GREHQGSIISRGRDIRDPVHRSDPEKEAT) has biased composition (basic and acidic residues).

It belongs to the TIFY/JAZ family. As to quaternary structure, interacts with AFPH2/NINJA. In terms of processing, ubiquitinated. Targeted for degradation by the SCF(COI1) E3 ubiquitin ligase-proteasome pathway during jasmonate signaling.

It localises to the nucleus. In terms of biological role, repressor of jasmonate responses. This chain is Protein TIFY 8, found in Arabidopsis thaliana (Mouse-ear cress).